The following is a 23-amino-acid chain: GLKDIFKAGLGSLVKNIAAHVAN.

Asn23 is subject to Asparagine amide.

In terms of tissue distribution, expressed by the skin glands.

It localises to the secreted. It is found in the target cell membrane. Functionally, antibacterial peptide with amphipathic alpha-helical structure. Shows selective growth inhibitory activity against the Gram-negative bacteria E.coli (MIC=25 uM) Has a weak hemolytic activity against human erythrocytes (LC(50)&gt;100 uM). Is very weakly active against S.aureus (MIC=200 uM). The sequence is that of Alyteserin-1d from Alytes obstetricans (Common midwife toad).